An 871-amino-acid chain; its full sequence is MADSSEGPRAGPGEVAELPGDESGTPGGEAFPLSSLANLFEGEDGSLSPSPADASRPAGPGDGRPNLRMKFQGAFRKGVPNPIDLLESTLYESSVVPGPKKAPMDSLFDYGTYRHHSSDNKRWRKKIIEKQPQSPKAPAPQPPPILKVFNRPILFDIVSRGSTADLDGLLPFLLTHKKRLTDEEFREPSTGKTCLPKALLNLSNGRNDTIPVLLDIAERTGNMREFINSPFRDIYYRGQTALHIAIERRCKHYVELLVAQGADVHAQARGRFFQPKDEGGYFYFGELPLSLAACTNQPHIVNYLTENPHKKADMRRQDSRGNTVLHALVAIADNTRENTKFVTKMYDLLLLKCARLFPDSNLEAVLNNDGLSPLMMAAKTGKIGIFQHIIRREVTDEDTRHLSRKFKDWAYGPVYSSLYDLSSLDTCGEEASVLEILVYNSKIENRHEMLAVEPINELLRDKWRKFGAVSFYINVVSYLCAMVIFTLTAYYQPLEGTPPYPYRTTVDYLRLAGEVITLFTGVLFFFTNIKDLFMKKCPGVNSLFIDGSFQLLYFIYSVLVIVSAALYLAGIEAYLAVMVFALVLGWMNALYFTRGLKLTGTYSIMIQKILFKDLFRFLLVYLLFMIGYASALVSLLNPCANMKVCNEDQTNCTVPTYPSCRDSETFSTFLLDLFKLTIGMGDLEMLSSTKYPVVFIILLVTYIILTFVLLLNMLIALMGETVGQVSKESKHIWKLQWATTILDIERSFPVFLRKAFRSGEMVTVGKSSDGTPDRRWCFRVDEVNWSHWNQNLGIINEDPGKNETYQYYGFSHTVGRLRRDRWSSVVPRVVELNKNSNPDEVVVPLDSMGNPRCDGHQQGYPRKWRTDDAPL.

The disordered stretch occupies residues 1–68 (MADSSEGPRA…GPGDGRPNLR (68 aa)). Topologically, residues 1 to 469 (MADSSEGPRA…RDKWRKFGAV (469 aa)) are cytoplasmic. Tyrosine 110 carries the post-translational modification Phosphotyrosine. ATP contacts are provided by residues lysine 192, lysine 197, asparagine 201, 236 to 239 (YRGQ), and arginine 248. ANK repeat units follow at residues 237-266 (RGQTALHIAIERRCKHYVELLVAQGADVHA) and 284-313 (FGELPLSLAACTNQPHIVNYLTENPHKKAD). Residue 249–251 (RCK) participates in a 1,2-diacyl-sn-glycero-3-phospho-(1D-myo-inositol-4,5-bisphosphate) binding. Tyrosine 253 carries the phosphotyrosine modification. A 1,2-diacyl-sn-glycero-3-phospho-(1D-myo-inositol-4,5-bisphosphate)-binding positions include 296–299 (NQPH) and lysine 344. Residues 369–398 (DGLSPLMMAAKTGKIGIFQHIIRREVTDED) form an ANK 3 repeat. A helical membrane pass occupies residues 470 to 490 (SFYINVVSYLCAMVIFTLTAY). Topologically, residues 491 to 507 (YQPLEGTPPYPYRTTVD) are extracellular. A helical membrane pass occupies residues 508–534 (YLRLAGEVITLFTGVLFFFTNIKDLFM). The Cytoplasmic segment spans residues 535-547 (KKCPGVNSLFIDG). The chain crosses the membrane as a helical span at residues 548 to 568 (SFQLLYFIYSVLVIVSAALYL). At 569–572 (AGIE) the chain is on the extracellular side. A helical transmembrane segment spans residues 573–593 (AYLAVMVFALVLGWMNALYFT). Topologically, residues 594 to 608 (RGLKLTGTYSIMIQK) are cytoplasmic. Residues 609–636 (ILFKDLFRFLLVYLLFMIGYASALVSLL) traverse the membrane as a helical segment. Over 637-665 (NPCANMKVCNEDQTNCTVPTYPSCRDSET) the chain is Extracellular. The pore-forming intramembrane region spans 666-685 (FSTFLLDLFKLTIGMGDLEM). The Selectivity filter signature appears at 679-682 (GMGD). Aspartate 682 serves as a coordination point for Ca(2+). The Extracellular segment spans residues 686–693 (LSSTKYPV). The chain crosses the membrane as a helical span at residues 694–722 (VFIILLVTYIILTFVLLLNMLIALMGETV). Over 723–871 (GQVSKESKHI…RKWRTDDAPL (149 aa)) the chain is Cytoplasmic. A Phosphotyrosine modification is found at tyrosine 805. Residues 812 to 831 (HTVGRLRRDRWSSVVPRVVE) are interaction with calmodulin and ITPR3. At serine 824 the chain carries Phosphoserine. The segment at 849 to 871 (GNPRCDGHQQGYPRKWRTDDAPL) is disordered.

The protein belongs to the transient receptor (TC 1.A.4) family. TrpV subfamily. TRPV4 sub-subfamily. Homotetramer. Self-associates in an isoform-specific manner. Isoform 1 and isoform 5 can oligomerize, but isoform 2, isoform 4 and isoform 6 cannot oligomerize. Interacts with calmodulin. Interacts with Map7 and Src family Tyr protein kinases LYN, SRC, FYN, HCK, LCK and YES. Interacts with CTNNB1. The TRPV4 and CTNNB1 complex can interact with CDH1. Interacts with PACSIN1, PACSIN2 and PACSIN3 (via SH3 domain). Part of a complex containing MLC1, AQP4, HEPACAM and ATP1B1. Interacts with ITPR3. Interacts with AQP5; the interaction is probably indirect and regulates TRPV4 activation by hypotonicity. Interacts with ANO1. Interacts (via C-terminus) with PKD2 (via C-terminus). Interacts with DDX3X; this interaction is decreased when the channel is activated. In terms of processing, N-glycosylated. As to expression, found in the synoviocytes from patients with (RA) and without (CTR) rheumatoid arthritis (at protein level).

Its subcellular location is the cell membrane. The protein resides in the apical cell membrane. The protein localises to the cell junction. It is found in the adherens junction. It localises to the cell projection. Its subcellular location is the cilium. The protein resides in the endoplasmic reticulum. It catalyses the reaction Ca(2+)(in) = Ca(2+)(out). Its activity is regulated as follows. Channel activation is inhibited by binding to phosphatidylinositol-4,5-bisphosphate, and to a much lesser degree by phosphatidylinositol-3,4,5-trisphosphate. Not inhibited by phosphatidylinositol-3,4-bisphosphate and phosphatidylinositol-3,5-bisphosphate. In terms of biological role, non-selective calcium permeant cation channel involved in osmotic sensitivity and mechanosensitivity. Activation by exposure to hypotonicity within the physiological range exhibits an outward rectification. Also activated by heat, low pH, citrate and phorbol esters. Increase of intracellular Ca(2+) potentiates currents. Channel activity seems to be regulated by a calmodulin-dependent mechanism with a negative feedback mechanism. Promotes cell-cell junction formation in skin keratinocytes and plays an important role in the formation and/or maintenance of functional intercellular barriers. Acts as a regulator of intracellular Ca(2+) in synoviocytes. Plays an obligatory role as a molecular component in the nonselective cation channel activation induced by 4-alpha-phorbol 12,13-didecanoate and hypotonic stimulation in synoviocytes and also regulates production of IL-8. Together with PKD2, forms mechano- and thermosensitive channels in cilium. Negatively regulates expression of PPARGC1A, UCP1, oxidative metabolism and respiration in adipocytes. Regulates expression of chemokines and cytokines related to pro-inflammatory pathway in adipocytes. Together with AQP5, controls regulatory volume decrease in salivary epithelial cells. Required for normal development and maintenance of bone and cartilage. In its inactive state, may sequester DDX3X at the plasma membrane. When activated, the interaction between both proteins is affected and DDX3X relocalizes to the nucleus. In neurons of the central nervous system, could play a role in triggering voluntary water intake in response to increased sodium concentration in body fluid. Its function is as follows. Non-selective calcium permeant cation channel involved in osmotic sensitivity and mechanosensitivity. Activation by exposure to hypotonicity within the physiological range exhibits an outward rectification. Also activated by phorbol esters. Has the same channel activity as isoform 1, and is activated by the same stimuli. Lacks channel activity, due to impaired oligomerization and intracellular retention. Functionally, (Microbial infection) Facilitates hepatitis C virus (HCV) replication, possibly through its action on DDX3X. In terms of biological role, (Microbial infection) Facilitates Dengue virus (DENV) replication, possibly through its action on DDX3X. Its function is as follows. (Microbial infection) Facilitates Zika virus (ZIKV) replication, possibly through its action on DDX3X. In Homo sapiens (Human), this protein is Transient receptor potential cation channel subfamily V member 4 (TRPV4).